We begin with the raw amino-acid sequence, 231 residues long: Ribosomal RNA small subunit methyltransferase G (231 aa).

S-adenosyl-L-methionine contacts are provided by residues Gly75, 125-126 (GE), and Arg140. The segment covering 204–213 (AEAEEGDSPE) has biased composition (acidic residues). The interval 204–231 (AEAEEGDSPEAADASRGVILELTKKNKG) is disordered.

The protein belongs to the methyltransferase superfamily. RNA methyltransferase RsmG family.

It localises to the cytoplasm. Specifically methylates the N7 position of a guanine in 16S rRNA. This Rhodopirellula baltica (strain DSM 10527 / NCIMB 13988 / SH1) protein is Ribosomal RNA small subunit methyltransferase G.